We begin with the raw amino-acid sequence, 304 residues long: Quinolinate synthase (304 aa).

Iminosuccinate is bound by residues His-24 and Ser-41. Cys-86 serves as a coordination point for [4Fe-4S] cluster. Iminosuccinate contacts are provided by residues 112–114 (YVN) and Ser-129. Residue Cys-171 participates in [4Fe-4S] cluster binding. Iminosuccinate is bound by residues 197-199 (HPE) and Thr-214. Cys-259 contacts [4Fe-4S] cluster.

The protein belongs to the quinolinate synthase family. Type 2 subfamily. [4Fe-4S] cluster is required as a cofactor.

The protein resides in the cytoplasm. The catalysed reaction is iminosuccinate + dihydroxyacetone phosphate = quinolinate + phosphate + 2 H2O + H(+). The protein operates within cofactor biosynthesis; NAD(+) biosynthesis; quinolinate from iminoaspartate: step 1/1. Catalyzes the condensation of iminoaspartate with dihydroxyacetone phosphate to form quinolinate. The sequence is that of Quinolinate synthase from Geotalea uraniireducens (strain Rf4) (Geobacter uraniireducens).